Reading from the N-terminus, the 415-residue chain is Glycerate 2-kinase (415 aa).

Lys-57 is a substrate binding site.

Belongs to the glycerate kinase type-1 family. In terms of assembly, homodimer. Mg(2+) is required as a cofactor. The cofactor is Ni(2+). It depends on Mn(2+) as a cofactor. Co(2+) serves as cofactor.

The enzyme catalyses (R)-glycerate + ATP = (2R)-2-phosphoglycerate + ADP + H(+). Functionally, catalyzes the ATP-dependent phosphorylation of D-glycerate to 2-phosphoglycerate. It can also partially utilize GTP, CTP or UTP as phosphate donor. This Picrophilus torridus (strain ATCC 700027 / DSM 9790 / JCM 10055 / NBRC 100828 / KAW 2/3) protein is Glycerate 2-kinase (gck).